We begin with the raw amino-acid sequence, 804 residues long: MAKSSSLNVRVVEGRALPAKDVSGSSDPYCLVKVDDEVVARTATVWRSLGPFWGEEYTVHLPLDFHQLAFYVLDEDTVGHDDIIGKISLSREAITADPRGIDSWINLSRVDPDAEVQGEICLSVQMLEDGQGRCLRCHVLQARDLAPRDISGTSDPFARVFWGSQSLETSTIKKTRFPHWDEVLELREMPGAPSPLRVELWDWDMVGKNDFLGMVEFSPKTLQQKPPKGWFRLLPFPRAEEDSGGNLGALRVKVRLIEDRVLPSQCYQPLMELLMESVQGPAEEDTASPLALLEELTLGDCRQDLATKLVKLFLGRGLAGRFLDYLTRREVARTMDPNTLFRSNSLASKSMEQFMKLVGMPYLHEVLKPVISRVFEEKKYMELDPCKMDLGRTRRISFKGALSEEQMRETSLGLLTGYLGPIVDAIVGSVGRCPPAMRLAFKQLHRRVEERFPQAEHQDVKYLAISGFLFLRFFAPAILTPKLFDLRDQHADPQTSRSLLLLAKAVQSIGNLGQQLGQGKELWMAPLHPFLLQCVSRVRDFLDRLVDVDGDEAGVPARALFPPSAIVREGYLLKRKEEPAGLATRFAFKKRYVWLSGETLSFSKSPEWQMCHSIPVSHIRAVERVDEGAFQLPHVMQVVTQDGTGALHTTYLQCKNVNELNQWLSALRKASAPNPNKLAACHPGAFRSARWTCCLQAERSAAGCSRTHSAVTLGDWSDPLDPDAEAQTVYRQLLLGRDQLRLKLLEDSNMDTTLEADTGACPEVLARQRAATARLLEVLADLDRAHEEFQQQERGKAALGPLGP.

C2 domains are found at residues 1–105 (MAKS…DSWI) and 116–231 (VQGE…KGWF). Ca(2+) contacts are provided by Asp21, Asp27, Asp74, Asp76, Asp82, Asp149, Asp155, Asp202, Asp204, and Asp210. Residues 317–545 (GLAGRFLDYL…SRVRDFLDRL (229 aa)) enclose the Ras-GAP domain. The region spanning 565–672 (AIVREGYLLK…WLSALRKASA (108 aa)) is the PH domain. A Btk-type zinc finger spans residues 674–710 (NPNKLAACHPGAFRSARWTCCLQAERSAAGCSRTHSA). Residues His682, Cys693, Cys694, and Cys704 each contribute to the Zn(2+) site.

Requires Ca(2+) as cofactor. In terms of tissue distribution, highly expressed in thyroid and adrenal medulla, lower expression in brain, spinal cord and trachea. Expressed in melanocytes.

Its function is as follows. Probable inhibitory regulator of the Ras-cyclic AMP pathway. Plays a role in dendrite formation by melanocytes. In Homo sapiens (Human), this protein is RasGAP-activating-like protein 1.